A 204-amino-acid chain; its full sequence is Carbon disulfide hydrolase (204 aa).

The Zn(2+) site is built by cysteine 35, histidine 88, and cysteine 91.

The protein belongs to the beta-class carbonic anhydrase family. Forms a hexadecameric catenane homooligomer, through interactions of two interlocked octameric rings. Exists as both octamers and hexadecamers in solution. Zn(2+) serves as cofactor.

The catalysed reaction is carbon disulfide + 2 H2O = 2 hydrogen sulfide + CO2 + 2 H(+). The protein operates within sulfur metabolism; hydrogen sulfide biosynthesis. Catalyzes the conversion of carbon disulfide into hydrogen sulfide and carbon dioxide, with carbonyl sulfide as an intermediate. Likely plays a key role in sulfur metabolism that allows Acidianus sp. A1-3 to grow on carbon disulfide as the main carbon and energy source. Does not show carbonic anhydrase activity (hydration of CO(2) to carbonate). This Acidianus sp. (strain A1-3) protein is Carbon disulfide hydrolase.